A 392-amino-acid chain; its full sequence is MTRFLLCSFALVLLYPSGIDMYLVGLPRIAQDLGASEAQLHIAFSVYLAGMASAMLFAGRIADRSGRKPVAIVGAVIFVVASLLCAQAHASSHFLVGRFIQGIGAGSCYVVAFAILRDTLDDRRRAKVLSLLNGITCIIPVLAPVLGHLIMLKYPWQSLFYTMTGMGVMVGLLSVFILRETRPTAHPQTATPQHGGSESLLNRFFLSRILITTLSVTAILTYVNVSPVLMMEEMGFDRGTYSMAMALMAMISMAVSFSTPFALSLFTPRTLMLTSQVLFLAAGLALSLATRQTLTLIGLGMICAGFSVGFGVAMSQALGPFTLRAGVASSVLGIAQVCGSSLWIWLAAIIGLSAMNMLIGILIACSIVSLVLLLVVTPPRVAQYDEEAAVES.

12 helical membrane passes run 4–24 (FLLC…MYLV), 38–58 (AQLH…MLFA), 70–90 (VAIV…QAHA), 95–115 (LVGR…AFAI), 131–151 (LLNG…HLIM), 158–178 (SLFY…VFIL), 209–229 (ILIT…SPVL), 246–266 (ALMA…LSLF), 270–290 (TLML…SLAT), 294–314 (LTLI…GVAM), 331–351 (VLGI…AIIG), and 357–377 (MLIG…LVVT).

Belongs to the major facilitator superfamily. DHA1 family. MdtL (TC 2.A.1.2.22) subfamily.

Its subcellular location is the cell inner membrane. In Klebsiella pneumoniae (strain 342), this protein is Multidrug resistance protein MdtL.